A 211-amino-acid polypeptide reads, in one-letter code: MLTIALSKGRILDDTLPLLAEAGIVPTENPDKSRKLIIPTTQADVRLLIVRATDVPTYVEHGAADLGVAGKDVLMEYTGQGLYEPLDLQIAKCRLMTAGAIGAVEPKGRLRVATKFVNVAKRYYAEQGRQVDIIKLYGSMELAPLIGLADKIIDVVDTGNTLRANGLEPQELIATISSRLVVNKASMKMQHARIQALIDTLRKAVESRHRC.

The protein belongs to the ATP phosphoribosyltransferase family. Short subfamily. In terms of assembly, heteromultimer composed of HisG and HisZ subunits.

The protein localises to the cytoplasm. It catalyses the reaction 1-(5-phospho-beta-D-ribosyl)-ATP + diphosphate = 5-phospho-alpha-D-ribose 1-diphosphate + ATP. Its pathway is amino-acid biosynthesis; L-histidine biosynthesis; L-histidine from 5-phospho-alpha-D-ribose 1-diphosphate: step 1/9. In terms of biological role, catalyzes the condensation of ATP and 5-phosphoribose 1-diphosphate to form N'-(5'-phosphoribosyl)-ATP (PR-ATP). Has a crucial role in the pathway because the rate of histidine biosynthesis seems to be controlled primarily by regulation of HisG enzymatic activity. This is ATP phosphoribosyltransferase from Pseudomonas syringae pv. tomato (strain ATCC BAA-871 / DC3000).